The sequence spans 359 residues: tRNA pseudouridine synthase B (359 aa).

Aspartate 63 (nucleophile) is an active-site residue.

It belongs to the pseudouridine synthase TruB family. Type 1 subfamily.

The catalysed reaction is uridine(55) in tRNA = pseudouridine(55) in tRNA. Functionally, responsible for synthesis of pseudouridine from uracil-55 in the psi GC loop of transfer RNAs. The chain is tRNA pseudouridine synthase B from Psychrobacter cryohalolentis (strain ATCC BAA-1226 / DSM 17306 / VKM B-2378 / K5).